Reading from the N-terminus, the 365-residue chain is uncharacterized protein (365 aa).

Residue glycine 31 to threonine 38 coordinates ATP.

It belongs to the archaeal ATPase family.

This is an uncharacterized protein from Methanocaldococcus jannaschii (strain ATCC 43067 / DSM 2661 / JAL-1 / JCM 10045 / NBRC 100440) (Methanococcus jannaschii).